We begin with the raw amino-acid sequence, 190 residues long: Elongation factor P (190 aa).

This sequence belongs to the elongation factor P family.

The protein resides in the cytoplasm. It functions in the pathway protein biosynthesis; polypeptide chain elongation. In terms of biological role, involved in peptide bond synthesis. Stimulates efficient translation and peptide-bond synthesis on native or reconstituted 70S ribosomes in vitro. Probably functions indirectly by altering the affinity of the ribosome for aminoacyl-tRNA, thus increasing their reactivity as acceptors for peptidyl transferase. The protein is Elongation factor P of Persephonella marina (strain DSM 14350 / EX-H1).